The primary structure comprises 121 residues: Large ribosomal subunit protein bL12 (121 aa).

It belongs to the bacterial ribosomal protein bL12 family. In terms of assembly, homodimer. Part of the ribosomal stalk of the 50S ribosomal subunit. Forms a multimeric L10(L12)X complex, where L10 forms an elongated spine to which 2 to 4 L12 dimers bind in a sequential fashion. Binds GTP-bound translation factors.

In terms of biological role, forms part of the ribosomal stalk which helps the ribosome interact with GTP-bound translation factors. Is thus essential for accurate translation. This Erwinia tasmaniensis (strain DSM 17950 / CFBP 7177 / CIP 109463 / NCPPB 4357 / Et1/99) protein is Large ribosomal subunit protein bL12.